The chain runs to 444 residues: Homogentisate 1,2-dioxygenase (444 aa).

Residue histidine 298 is the Proton acceptor of the active site. Fe cation contacts are provided by histidine 341 and glutamate 347. Homogentisate-binding residues include tyrosine 356 and histidine 377. Residue histidine 377 coordinates Fe cation.

It belongs to the homogentisate dioxygenase family. As to quaternary structure, hexamer; dimer of trimers. Requires Fe cation as cofactor.

It catalyses the reaction homogentisate + O2 = 4-maleylacetoacetate + H(+). It functions in the pathway amino-acid degradation; L-phenylalanine degradation; acetoacetate and fumarate from L-phenylalanine: step 4/6. Functionally, involved in the catabolism of homogentisate (2,5-dihydroxyphenylacetate or 2,5-OH-PhAc), a central intermediate in the degradation of phenylalanine and tyrosine. Catalyzes the oxidative ring cleavage of the aromatic ring of homogentisate to yield maleylacetoacetate. The sequence is that of Homogentisate 1,2-dioxygenase from Burkholderia ambifaria (strain MC40-6).